The chain runs to 353 residues: UDP-xylose transporter 2 (353 aa).

10 consecutive transmembrane segments (helical) span residues Phe-7 to Ile-27, Ala-31 to Val-51, Val-75 to Phe-95, Phe-100 to Phe-120, Leu-132 to Leu-152, Ser-154 to Ile-174, Ala-194 to Phe-214, Phe-224 to Ile-244, Val-250 to Leu-270, and Ile-280 to Glu-300. The interval Thr-308–Ala-353 is disordered. Residues Glu-327–Ala-353 are compositionally biased toward polar residues. Ser-334 is subject to Phosphoserine.

The protein belongs to the TPT transporter family. TPT (TC 2.A.7.9) subfamily. As to expression, ubiquitous.

The protein localises to the golgi apparatus membrane. Nucleotide-sugar transporter that transports UDP-xylose and UMP in a strict counter-exchange mode. The chain is UDP-xylose transporter 2 from Arabidopsis thaliana (Mouse-ear cress).